The following is a 111-amino-acid chain: Ribonuclease P protein component (111 aa).

It belongs to the RnpA family. In terms of assembly, consists of a catalytic RNA component (M1 or rnpB) and a protein subunit.

The enzyme catalyses Endonucleolytic cleavage of RNA, removing 5'-extranucleotides from tRNA precursor.. Functionally, RNaseP catalyzes the removal of the 5'-leader sequence from pre-tRNA to produce the mature 5'-terminus. It can also cleave other RNA substrates such as 4.5S RNA. The protein component plays an auxiliary but essential role in vivo by binding to the 5'-leader sequence and broadening the substrate specificity of the ribozyme. The chain is Ribonuclease P protein component from Borreliella afzelii (strain PKo) (Borrelia afzelii).